We begin with the raw amino-acid sequence, 85 residues long: uncharacterized protein (85 aa).

This is an uncharacterized protein from Sinorhizobium fredii (strain NBRC 101917 / NGR234).